The following is a 446-amino-acid chain: Exodeoxyribonuclease 7 large subunit (446 aa).

It belongs to the XseA family. In terms of assembly, heterooligomer composed of large and small subunits.

Its subcellular location is the cytoplasm. It carries out the reaction Exonucleolytic cleavage in either 5'- to 3'- or 3'- to 5'-direction to yield nucleoside 5'-phosphates.. Bidirectionally degrades single-stranded DNA into large acid-insoluble oligonucleotides, which are then degraded further into small acid-soluble oligonucleotides. The protein is Exodeoxyribonuclease 7 large subunit of Streptococcus gordonii (strain Challis / ATCC 35105 / BCRC 15272 / CH1 / DL1 / V288).